The chain runs to 153 residues: Glucose-6-phosphate 1-dehydrogenase (153 aa).

Residues Arg-21 and Lys-120 each coordinate NADP(+). Lys-120 is a binding site for D-glucose 6-phosphate.

This sequence belongs to the glucose-6-phosphate dehydrogenase family.

It localises to the cytoplasm. The protein resides in the cytosol. The enzyme catalyses D-glucose 6-phosphate + NADP(+) = 6-phospho-D-glucono-1,5-lactone + NADPH + H(+). It functions in the pathway carbohydrate degradation; pentose phosphate pathway; D-ribulose 5-phosphate from D-glucose 6-phosphate (oxidative stage): step 1/3. In terms of biological role, cytosolic glucose-6-phosphate dehydrogenase that catalyzes the first and rate-limiting step of the oxidative branch within the pentose phosphate pathway/shunt, an alternative route to glycolysis for the dissimilation of carbohydrates and a major source of reducing power and metabolic intermediates for fatty acid and nucleic acid biosynthetic processes. This Hyalophora cecropia (Cecropia moth) protein is Glucose-6-phosphate 1-dehydrogenase (ZW).